A 2694-amino-acid polypeptide reads, in one-letter code: Teneurin-3 (2694 aa).

Disordered regions lie at residues 1-45 (MDVK…SSSE), 106-132 (PSSLSSPSVTEHSHSQPPSPNLHDNQS), and 161-198 (TQPAPSHSCNEQPSNQHQQGQSTLPPVPPPHKQQPSVT). Positions 1 to 306 (MDVKERRPYC…KSSKYCSWRC (306 aa)) constitute a Teneurin N-terminal domain. Residues 1–312 (MDVKERRPYC…SWRCTALSAM (312 aa)) are Cytoplasmic-facing. Residues 163-184 (PAPSHSCNEQPSNQHQQGQSTL) are compositionally biased toward polar residues. A helical membrane pass occupies residues 313 to 333 (AVSILLSVLLCYCIAMHLFGL). Residues 334-2694 (NWQLQETEGY…FLRQSEIGKR (2361 aa)) lie on the Extracellular side of the membrane. N-linked (GlcNAc...) asparagine glycans are attached at residues Asn374 and Asn413. EGF-like domains are found at residues 508–539 (TLTECPHNCHGNGDCRTGTCHCFPGFLGPDCS), 540–570 (RAACPVLCSGNGQYSRGRCLCYSGWKGTECD), 572–604 (PSNQCIDIHCSGHGICIMGTCACNTGYKGDNCE), 605–636 (EVDCLDPSCSSHGVCIHGECHCNPGWGGNNCE), 638–671 (LKTMCPDQCSGHGTYQTESGTCTCDTNWTGPDCS), 672–703 (IEVCAVDCGSHGVCIGGSCRCEEGWTGSVCDL), 704–733 (KACHPRCTEHGTCKDGKCECHQGWTGEHCT), and 734–768 (VEGCPGLCNSNGRCTLDQNGWHCVCQPGWRGAGCD). Disulfide bonds link Cys512–Cys522, Cys516–Cys527, Cys529–Cys538, Cys547–Cys558, Cys560–Cys569, Cys576–Cys587, Cys581–Cys592, Cys594–Cys603, Cys608–Cys619, Cys613–Cys624, Cys626–Cys635, Cys646–Cys659, Cys661–Cys670, Cys675–Cys685, Cys679–Cys690, Cys692–Cys701, Cys706–Cys716, Cys710–Cys721, Cys723–Cys732, Cys737–Cys747, Cys741–Cys756, and Cys758–Cys767. Residue Asn664 is glycosylated (N-linked (GlcNAc...) asparagine). Residues Asn854, Asn877, and Asn1048 are each glycosylated (N-linked (GlcNAc...) asparagine). 5 NHL repeats span residues 1166-1192 (LLAPVALACGSDGSLFVGDFNYIRRIF), 1194-1238 (SGNV…PKAL), 1264-1308 (ARCG…NGII), 1325-1365 (CDNS…ITEN), and 1452-1495 (CYQT…IRHN). Asn1196 carries N-linked (GlcNAc...) asparagine glycosylation. The YD 1 repeat unit spans residues 1505–1524 (FEVASPASQELYVFDSNGTH). N-linked (GlcNAc...) asparagine glycosylation is found at Asn1521 and Asn1538. YD repeat units follow at residues 1541 to 1561 (YSNEDDVTAVTDSSGNTLRVR), 1604 to 1623 (YHGNSGLLATKSIQIGWTTF), and 1624 to 1646 (YDYDSEGRLTNVTFPTGVITSLI). Residues Asn1634, Asn1671, Asn1729, and Asn1814 are each glycosylated (N-linked (GlcNAc...) asparagine). YD repeat units lie at residues 1817–1836 (YSSTGQVTSLQRGPTTERVE), 1858–1876 (YLDKSMVLLLHSQRQYIFD), 1877–1897 (YDLQDRLSAITMPSVARHTMQ), 1904–1921 (YYRNIYNPPESNASVTVD), 1922–1943 (YSEDGQLLRVAHLGTGRRVLYK), 1944–1961 (YRRQNKLSEILYDSTRVS), 1964–1984 (YDETAGVLKTVNLQSEGFICS), 1987–2007 (YRQIGPLVDRQIFRFSEDGMV), 2015–2034 (YDNSFRVTSMQGVINETPLP), 2040–2057 (FDDISGKVEQFGKFGVIY), 2058–2084 (YDINQIISTAVMTYTKHFDVHGRIKEI), 2086–2099 (YEIFRSLMYWITIQ), 2100–2123 (YDNMGRVTKREIKIGPFANTTKYG), 2126–2146 (YDVDGQLQTVYLNEKMMWRYN), 2147–2167 (YDLNGNLHLLNPGNSARLTPL), 2169–2189 (YDLRDRITRLGDVQYRMDEDG), 2201–2221 (YNSKGLLVRVHSKASGWTIQY), and 2223–2243 (YDGLGRRLASRNSLGQHLQFF). N-linked (GlcNAc...) asparagine glycosylation occurs at Asn1915. Asn2118 carries N-linked (GlcNAc...) asparagine glycosylation. An N-linked (GlcNAc...) asparagine glycan is attached at Asn2258. A YD 23 repeat occupies 2269-2310 (YDLQGHLFAMEISSGEEFYIACDNTGTPLAVFSSNGLLLKQV). N-linked (GlcNAc...) asparagine glycosylation is present at Asn2571.

Belongs to the tenascin family. Teneurin subfamily. In terms of assembly, homodimer; disulfide-linked; to mediate homophilic cell adhesion. In terms of tissue distribution, expressed by retinal ganglion cells and their presynaptic amacrine and postsynaptic tectal cell targets.

The protein localises to the cell membrane. Its subcellular location is the cell projection. The protein resides in the axon. In terms of biological role, involved in neural development by regulating the establishment of proper connectivity within the nervous system. Acts in both pre- and postsynaptic neurons in the hippocampus to control the assembly of a precise topographic projection: required in both CA1 and subicular neurons for the precise targeting of proximal CA1 axons to distal subiculum, probably by promoting homophilic cell adhesion. Required by retinal ganglion cells for acquisition of their correct morphological and functional connectivity, thereby playing a key role in the development of the visual pathway. The chain is Teneurin-3 (tenm3) from Danio rerio (Zebrafish).